Here is a 78-residue protein sequence, read N- to C-terminus: Large ribosomal subunit protein bL31 (78 aa).

The protein belongs to the bacterial ribosomal protein bL31 family. Type A subfamily. As to quaternary structure, part of the 50S ribosomal subunit.

Functionally, binds the 23S rRNA. The chain is Large ribosomal subunit protein bL31 from Rickettsia prowazekii (strain Madrid E).